A 104-amino-acid polypeptide reads, in one-letter code: Phosphocarrier protein HPr (104 aa).

An HPr domain is found at 17–104 (ELSAIFMIRN…EVFNSGFGEL (88 aa)). The active-site Pros-phosphohistidine intermediate is histidine 31.

It belongs to the HPr family.

The protein resides in the cytoplasm. Functionally, general (non sugar-specific) component of the phosphoenolpyruvate-dependent sugar phosphotransferase system (sugar PTS). This major carbohydrate active-transport system catalyzes the phosphorylation of incoming sugar substrates concomitantly with their translocation across the cell membrane. The phosphoryl group from phosphoenolpyruvate (PEP) is transferred to the phosphoryl carrier protein HPr by enzyme I. Phospho-HPr then transfers it to the PTS EIIA domain. The chain is Phosphocarrier protein HPr (ptsH) from Chlamydia muridarum (strain MoPn / Nigg).